The sequence spans 241 residues: DnaA regulatory inactivator Hda (241 aa).

Belongs to the DnaA family. HdA subfamily. As to quaternary structure, the active form seems to be an ADP-bound monomer. Forms the RIDA complex (regulatory inactivation of DnaA) of ATP-DnaA, ADP-Hda and the DNA-loaded beta sliding clamp (dnaN).

Functionally, mediates the interaction of DNA replication initiator protein DnaA with DNA polymerase subunit beta sliding clamp (dnaN). Stimulates hydrolysis of ATP-DnaA to ADP-DnaA, rendering DnaA inactive for reinitiation, a process called regulatory inhibition of DnaA or RIDA. The chain is DnaA regulatory inactivator Hda from Salmonella paratyphi A (strain ATCC 9150 / SARB42).